The chain runs to 258 residues: Hemin import ATP-binding protein HmuV (258 aa).

The region spanning 2–242 (LTAEKLCVER…SKIEELYDFP (241 aa)) is the ABC transporter domain. 34–41 (GANGAGKS) serves as a coordination point for ATP.

It belongs to the ABC transporter superfamily. Heme (hemin) importer (TC 3.A.1.14.5) family. As to quaternary structure, the complex is composed of two ATP-binding proteins (HmuV), two transmembrane proteins (HmuU) and a solute-binding protein (HmuT).

The protein resides in the cell inner membrane. Its function is as follows. Part of the ABC transporter complex HmuTUV involved in hemin import. Responsible for energy coupling to the transport system. The sequence is that of Hemin import ATP-binding protein HmuV from Hydrogenovibrio crunogenus (strain DSM 25203 / XCL-2) (Thiomicrospira crunogena).